The primary structure comprises 545 residues: Glucose-6-phosphate isomerase (545 aa).

The active-site Proton donor is Glu-351. Catalysis depends on residues His-382 and Lys-510.

This sequence belongs to the GPI family.

Its subcellular location is the cytoplasm. It catalyses the reaction alpha-D-glucose 6-phosphate = beta-D-fructose 6-phosphate. It participates in carbohydrate biosynthesis; gluconeogenesis. Its pathway is carbohydrate degradation; glycolysis; D-glyceraldehyde 3-phosphate and glycerone phosphate from D-glucose: step 2/4. Catalyzes the reversible isomerization of glucose-6-phosphate to fructose-6-phosphate. This is Glucose-6-phosphate isomerase from Helicobacter pylori (strain G27).